The chain runs to 271 residues: Pyridoxine kinase (271 aa).

Asparagine 141 is a binding site for ATP. Glutamate 144 contacts Mg(2+). Residues 178-182, aspartate 190, isoleucine 206, glycine 215, and lysine 240 contribute to the ATP site; that span reads TGGGK.

Belongs to the ThiD family. Homodimer.

It catalyses the reaction pyridoxal + ATP = pyridoxal 5'-phosphate + ADP + H(+). Functionally, phosphorylates B6 vitamers; functions in a salvage pathway. Uses pyridoxal, pyridoxine, and pyridoxamine as substrates. Can also use hydroxymethylpyrimidine (HMP) as substrate. In Bacillus subtilis (strain 168), this protein is Pyridoxine kinase (pdxK).